We begin with the raw amino-acid sequence, 253 residues long: MQKLIMGNWKMNGSSASIKELCKGISEVNYNSEKVAVAVFPSSVYVKEVLAQLPKEIGVGLQNITFYDNGAYTGELSAEMLHDVGCNYLLIGHSERRSLFGETDQDVFKKLNKIIDTSVVPVVCIGESLEDRQGGRLEKVLTTQLSLILENLSIEQLARVIIAYEPVWAIGTGVVASLEQVQETHQFIRSLVAKVDENLAKNMKIVYGGSLKAENAKDILSLPDVDGGLIGGASLKASEFNEIINQANKICTE.

8 to 10 (NWK) serves as a coordination point for substrate. H93 functions as the Electrophile in the catalytic mechanism. E165 (proton acceptor) is an active-site residue. Substrate-binding positions include G171, S210, and 231–232 (GG).

It belongs to the triosephosphate isomerase family. Homodimer.

The protein resides in the cytoplasm. The catalysed reaction is D-glyceraldehyde 3-phosphate = dihydroxyacetone phosphate. It participates in carbohydrate biosynthesis; gluconeogenesis. Its pathway is carbohydrate degradation; glycolysis; D-glyceraldehyde 3-phosphate from glycerone phosphate: step 1/1. Involved in the gluconeogenesis. Catalyzes stereospecifically the conversion of dihydroxyacetone phosphate (DHAP) to D-glyceraldehyde-3-phosphate (G3P). This is Triosephosphate isomerase from Francisella philomiragia subsp. philomiragia (strain ATCC 25017 / CCUG 19701 / FSC 153 / O#319-036).